The following is a 448-amino-acid chain: Beclin-1 (448 aa).

Methionine 1 is subject to N-acetylmethionine. A phosphoserine mark is found at serine 14 and serine 29. Positions 47–72 are disordered; the sequence is TTAQAKPGESQEEEANSGEEPFIETR. 3 positions are modified to phosphoserine; by AMPK: serine 88, serine 91, and serine 94. The short motif at 106–125 is the BH3 element; sequence TMENLSRRLKVTGDLFDIMS. The segment at 110-157 is interaction with BCL2 and BCL2L1 isoform Bcl-X(L); it reads LSRRLKVTGDLFDIMSGQTDVDHPLCEECTDTLLDQLDTQLNVTENEC. Residue threonine 117 is modified to Phosphothreonine; by DAPK1. Residues 140–267 are a coiled coil; that stretch reads DTLLDQLDTQ…QLDKLKKTNV (128 aa). The segment at 243–448 is evolutionary conserved domain (ECD); that stretch reads DELKSVENQM…AWVSSQFYNK (206 aa). Residues lysine 400 and lysine 435 each participate in a glycyl lysine isopeptide (Lys-Gly) (interchain with G-Cter in ubiquitin) cross-link. The segment at 423–448 is required for membrane-association; it reads WTKALKFMLTNLKWGLAWVSSQFYNK.

This sequence belongs to the beclin family. In terms of assembly, a homodimeric form is proposed to exist; this metastable form readily transits to ATG14- or UVRAG-containing complexes with BECN1:UVRAG being more stable than BECN1:ATG14. Component of the PI3K (PI3KC3/PI3K-III/class III phosphatidylinositol 3-kinase) complex the core of which is composed of the catalytic subunit PIK3C3, the regulatory subunit PIK3R4 and BECN1 associating with additional regulatory/auxiliary subunits to form alternative complex forms. Alternative complex forms containing a fourth regulatory subunit in a mutually exclusive manner are PI3K complex I (PI3KC3-C1) containing ATG14, and PI3K complex II (PI3KC3-C2) containing UVRAG. PI3KC3-C1 displays a V-shaped architecture with PIK3R4 serving as a bridge between PIK3C3 and the ATG14:BECN1 subcomplex. Both, PI3KC3-C1 and PI3KC3-C2, can associate with further regulatory subunits, such as RUBCN, SH3GLB1/Bif-1 and AMBRA1. PI3KC3-C1 probably associates with PIK3CB. Forms a complex with PPP2CA and AMBRA1; AMBRA1 and BECN1 components of the complex regulate MYC stability via different pathways. Component of the complex, at least composed of LRPPRC, BECN1 and BCL2; the interactions prevent BECN1 from forming an autophagy-inducing complex with PIK3C3. Interacts with AMBRA1, GOPC, GRID2. Interacts with BCL2 and BCL2L1 isoform Bcl-X(L); the interaction inhibits BECN1 function in promoting autophagy by interfering with the formation of the PI3K complex. Interacts with cytosolic HMGB1; inhibits the interaction of BECN1 and BCL2 leading to promotion of autophagy. Interacts with USP10, USP13, DAPK1, RAB39A. Interacts with SLAMF1. Interacts with the poly-Gln domain of ATXN3; the interaction causes deubiquitination at Lys-400 and stabilizes BECN1. Interacts with VMP1. Interacts with TRIM5; the interaction causes activation of BECN1 by causing its dissociation from its inhibitors BCL2 and TAB2. Interacts with active ULK1 (phosphorylated on 'Ser-317') and MEFV simultaneously. Interacts with WDR81 and WDR91; negatively regulates the PI3 kinase/PI3K activity associated with endosomal membranes. Interacts with LAPTM4B; competes with EGFR for LAPTM4B binding; regulates EGFR activity. Interacts with TRIM50. Interacts with TRIM16. Interacts with ATG14; this interaction is increased in the absence of TMEM39A. Interacts with WASHC1; preventing interaction with AMBRA1 and the DCX(AMBRA1) complex and subsequent ubiquitination. Interacts with TRIM17. Interacts with BCL2L10/BCL-B (via BH1 domain). Interacts with SH3BGRL. Interacts with IRGM; enhancing BECN1-interacting partners and influencing the composition of the BECN1 complex. Interacts with ARMC3. Interacts with LRPPRC. In terms of processing, phosphorylation at Thr-117 by DAPK1 reduces its interaction with BCL2 and BCL2L1 and promotes induction of autophagy. In response to autophagic stimuli, phosphorylated at serine residues by AMPK in an ATG14-dependent manner, and this phosphorylation is critical for maximally efficient autophagy. Polyubiquitinated by NEDD4, both with 'Lys-11'- and 'Lys-63'-linkages. 'Lys-11'-linked polyubiquitination leads to degradation and is enhanced when the stabilizing interaction partner VPS34 is depleted. Deubiquitinated by USP10 and USP13, leading to stabilize the PIK3C3/VPS34-containing complexes. Polyubiquitinated at Lys-400 with 'Lys-48'-linkages. 'Lys-48'-linked polyubiquitination of Lys-400 leads to degradation. Deubiquitinated by ATXN3, leading to stabilization. Ubiquitinated at Lys-435 via 'Lys-63'-linkage by the DCX(AMBRA1) complex, thereby increasing the association between BECN1 and PIK3C3 to promote PIK3C3 activity. 'Lys-48'-linked ubiquitination by RNF216 leads to proteasomal degradation and autophagy inhibition. Post-translationally, proteolytically processed by caspases including CASP8 and CASP3; the C-terminal fragments lack autophagy-inducing capacity and are proposed to induce apoptosis. Thus the cleavage is proposed to be an determinant to switch from autophagy to apoptosis pathways affecting cellular homeostasis including viral infections and survival of tumor cells.

The protein resides in the cytoplasm. The protein localises to the golgi apparatus. Its subcellular location is the trans-Golgi network membrane. It localises to the endosome membrane. It is found in the endoplasmic reticulum membrane. The protein resides in the mitochondrion membrane. The protein localises to the cytoplasmic vesicle. Its subcellular location is the autophagosome. It localises to the mitochondrion. It is found in the nucleus. Plays a central role in autophagy. Acts as a core subunit of the PI3K complex that mediates formation of phosphatidylinositol 3-phosphate; different complex forms are believed to play a role in multiple membrane trafficking pathways: PI3KC3-C1 is involved in initiation of autophagosomes and PI3KC3-C2 in maturation of autophagosomes and endocytosis. Involved in regulation of degradative endocytic trafficking and required for the abscission step in cytokinesis, probably in the context of PI3KC3-C2. Essential for the formation of PI3KC3-C2 but not PI3KC3-C1 PI3K complex forms. Involved in endocytosis. May play a role in antiviral host defense. In terms of biological role, beclin-1-C 35 kDa localized to mitochondria can promote apoptosis; it induces the mitochondrial translocation of BAX and the release of proapoptotic factors. The protein is Beclin-1 (Becn1) of Rattus norvegicus (Rat).